Reading from the N-terminus, the 194-residue chain is Peptidyl-tRNA hydrolase (194 aa).

Tyrosine 17 is a tRNA binding site. The Proton acceptor role is filled by histidine 22. Phenylalanine 68, asparagine 70, and asparagine 116 together coordinate tRNA.

It belongs to the PTH family. In terms of assembly, monomer.

It is found in the cytoplasm. It catalyses the reaction an N-acyl-L-alpha-aminoacyl-tRNA + H2O = an N-acyl-L-amino acid + a tRNA + H(+). Functionally, hydrolyzes ribosome-free peptidyl-tRNAs (with 1 or more amino acids incorporated), which drop off the ribosome during protein synthesis, or as a result of ribosome stalling. Its function is as follows. Catalyzes the release of premature peptidyl moieties from peptidyl-tRNA molecules trapped in stalled 50S ribosomal subunits, and thus maintains levels of free tRNAs and 50S ribosomes. The sequence is that of Peptidyl-tRNA hydrolase from Histophilus somni (strain 2336) (Haemophilus somnus).